The primary structure comprises 138 residues: Small ribosomal subunit protein uS11c (138 aa).

The interval 1 to 22 (MAKAIPKISSRRNGRIGSRKGA) is disordered. Positions 9-22 (SSRRNGRIGSRKGA) are enriched in basic residues.

This sequence belongs to the universal ribosomal protein uS11 family. Part of the 30S ribosomal subunit.

Its subcellular location is the plastid. The protein localises to the chloroplast. In Nicotiana tabacum (Common tobacco), this protein is Small ribosomal subunit protein uS11c.